The sequence spans 120 residues: Vanadium-binding protein 2 (120 aa).

The N-terminal stretch at methionine 1–alanine 20 is a signal peptide. The propeptide occupies threonine 21–tyrosine 29. Intrachain disulfides connect cysteine 34-cysteine 88, cysteine 38-cysteine 84, cysteine 42-cysteine 81, cysteine 48-cysteine 74, cysteine 52-cysteine 69, cysteine 56-cysteine 65, cysteine 92-cysteine 119, cysteine 97-cysteine 114, and cysteine 101-cysteine 111.

As to quaternary structure, interacts with VIP1. Expressed in vanadocytes.

It is found in the cytoplasm. In terms of biological role, acts as a vanadium reductase which may form an electron transfer cascade in conjunction with NADPH and glutathione through thiol disulfide exchange reactions. Partial cleavage of its disulfide bonds results in the reduction of V(5+) to V(4+). Binds up to 24 V(4+) ions per protein at pH 7.5. Also binds Fe(3+) and Cu(2+) and, to a lesser extent, Co(2+), Zn(2+) and Ni(2+). The sequence is that of Vanadium-binding protein 2 from Ascidia sydneiensis samea (Vanadium-rich ascidian).